A 213-amino-acid chain; its full sequence is Octanoyltransferase (213 aa).

The 183-residue stretch at 27–209 (AATPDEVWLC…RLLAAMPEPA (183 aa)) folds into the BPL/LPL catalytic domain. Substrate-binding positions include 66 to 73 (RGGQVTYH), 140 to 142 (ALG), and 153 to 155 (GVA). Cysteine 171 (acyl-thioester intermediate) is an active-site residue.

Belongs to the LipB family.

It localises to the cytoplasm. The enzyme catalyses octanoyl-[ACP] + L-lysyl-[protein] = N(6)-octanoyl-L-lysyl-[protein] + holo-[ACP] + H(+). Its pathway is protein modification; protein lipoylation via endogenous pathway; protein N(6)-(lipoyl)lysine from octanoyl-[acyl-carrier-protein]: step 1/2. In terms of biological role, catalyzes the transfer of endogenously produced octanoic acid from octanoyl-acyl-carrier-protein onto the lipoyl domains of lipoate-dependent enzymes. Lipoyl-ACP can also act as a substrate although octanoyl-ACP is likely to be the physiological substrate. The polypeptide is Octanoyltransferase (Bordetella petrii (strain ATCC BAA-461 / DSM 12804 / CCUG 43448)).